We begin with the raw amino-acid sequence, 298 residues long: Formylmethanofuran--tetrahydromethanopterin formyltransferase (298 aa).

It belongs to the FTR family. In terms of assembly, homotetramer.

The protein localises to the cytoplasm. It catalyses the reaction N-formylmethanofuran + 5,6,7,8-tetrahydromethanopterin + H(+) = N(5)-formyl-5,6,7,8-tetrahydromethanopterin + methanofuran. Its pathway is one-carbon metabolism; formaldehyde degradation; formate from formaldehyde (H(4)MPT route): step 4/5. Catalyzes the transfer of a formyl group from 5-formyl tetrahydromethanopterin (5-formyl-H(4)MPT) to methanofuran (MFR) to produce formylmethanofuran (formyl-MFR) and tetrahydromethanopterin (H(4)MPT). In Methylococcus capsulatus (strain ATCC 33009 / NCIMB 11132 / Bath), this protein is Formylmethanofuran--tetrahydromethanopterin formyltransferase.